We begin with the raw amino-acid sequence, 353 residues long: Holliday junction branch migration complex subunit RuvB (353 aa).

Residues 1–183 (MSGEGLVSAA…FGFTAHMDFY (183 aa)) are large ATPase domain (RuvB-L). Residues Leu-22, Arg-23, Gly-64, Lys-67, Thr-68, Ser-69, 130-132 (EDF), Arg-173, Tyr-183, and Arg-220 each bind ATP. Thr-68 is a Mg(2+) binding site. Residues 184–254 (DAAELALVLT…VARAALRIYD (71 aa)) form a small ATPAse domain (RuvB-S) region. The tract at residues 257 to 353 (ALGLDRLDRA…ALFGEDLPAS (97 aa)) is head domain (RuvB-H). DNA contacts are provided by Arg-312 and Arg-317.

It belongs to the RuvB family. As to quaternary structure, homohexamer. Forms an RuvA(8)-RuvB(12)-Holliday junction (HJ) complex. HJ DNA is sandwiched between 2 RuvA tetramers; dsDNA enters through RuvA and exits via RuvB. An RuvB hexamer assembles on each DNA strand where it exits the tetramer. Each RuvB hexamer is contacted by two RuvA subunits (via domain III) on 2 adjacent RuvB subunits; this complex drives branch migration. In the full resolvosome a probable DNA-RuvA(4)-RuvB(12)-RuvC(2) complex forms which resolves the HJ.

The protein localises to the cytoplasm. It catalyses the reaction ATP + H2O = ADP + phosphate + H(+). Its function is as follows. The RuvA-RuvB-RuvC complex processes Holliday junction (HJ) DNA during genetic recombination and DNA repair, while the RuvA-RuvB complex plays an important role in the rescue of blocked DNA replication forks via replication fork reversal (RFR). RuvA specifically binds to HJ cruciform DNA, conferring on it an open structure. The RuvB hexamer acts as an ATP-dependent pump, pulling dsDNA into and through the RuvAB complex. RuvB forms 2 homohexamers on either side of HJ DNA bound by 1 or 2 RuvA tetramers; 4 subunits per hexamer contact DNA at a time. Coordinated motions by a converter formed by DNA-disengaged RuvB subunits stimulates ATP hydrolysis and nucleotide exchange. Immobilization of the converter enables RuvB to convert the ATP-contained energy into a lever motion, pulling 2 nucleotides of DNA out of the RuvA tetramer per ATP hydrolyzed, thus driving DNA branch migration. The RuvB motors rotate together with the DNA substrate, which together with the progressing nucleotide cycle form the mechanistic basis for DNA recombination by continuous HJ branch migration. Branch migration allows RuvC to scan DNA until it finds its consensus sequence, where it cleaves and resolves cruciform DNA. This chain is Holliday junction branch migration complex subunit RuvB, found in Parafrankia sp. (strain EAN1pec).